Here is a 132-residue protein sequence, read N- to C-terminus: MNRVLCAPAAGAVRALRLIGWASRSLHPLPGSRDRAHPAAEEEDDPDRPIEFSSSKANPHRWSVGHTMGKGHQRPWWKVLPLSCFLVALIIWCYLREESEADQWLRQVWGEVPEPSDRSEEPETPAAYRART.

An N-terminal signal peptide occupies residues 1–15; that stretch reads MNRVLCAPAAGAVRA. Topologically, residues 16-78 are mitochondrial matrix; the sequence is LRLIGWASRS…GKGHQRPWWK (63 aa). The tract at residues 29–72 is disordered; sequence LPGSRDRAHPAAEEEDDPDRPIEFSSSKANPHRWSVGHTMGKGH. The helical transmembrane segment at 79 to 95 threads the bilayer; it reads VLPLSCFLVALIIWCYL. Residues 96 to 132 lie on the Mitochondrial intermembrane side of the membrane; the sequence is REESEADQWLRQVWGEVPEPSDRSEEPETPAAYRART. The disordered stretch occupies residues 110-132; that stretch reads GEVPEPSDRSEEPETPAAYRART.

Belongs to the UQCC4 family. Forms a complex, named COMB/coordinator of mitochondrial CYTB biogenesis, composed of UQCC1, UQCC2, UQCC4, UQCC5 and UQCC6; stabilizes nascent cytochrome b/MT-CYB and promotes its membrane insertion. Forms a complex, named COMA, composed of UQCC1, UQCC2 and UQCC4; activates MT-CYB translation. Forms a complex, named COMC, composed of UQCC1, UQCC2; UQCC3 and UQCC4; mediates MT-CYB hemylation and association with the first nuclear-encoded complex III subunit UQCRQ. Complexes COMA and COMB are bound to the mitochondrion inner membrane by UQCC4.

Its subcellular location is the mitochondrion inner membrane. In terms of biological role, required for the assembly and stability of the mitochondrial ubiquinol-cytochrome c reductase complex (complex III (CIII) or cytochrome b-c1 complex), a multisubunit transmembrane complex that is part of the mitochondrial electron transport chain (ETC) which drives oxidative phosphorylation. The polypeptide is Ubiquinol-cytochrome c reductase complex assembly factor 4 (Homo sapiens (Human)).